The following is a 360-amino-acid chain: MNNQGGDEIGKLFVGGLDWSTTQETLRSYFSQYGEVVDCVIMKDKTTNQSRGFGFVKFKDPNCVGTVLASRPHTLDGRNIDPKPCTPRGMQPERSRPREGWQQKEPRTENSRSNKIFVGGIPHNCGETELKEYFNRFGVVTEVVMIYDAEKQRPRGFGFITFEDEQSVDQAVNMHFHDIMGKKVEVKRAEPRDSKSQTPGPPGSNQWGSRAMQSTANGWTGQPPQTWQGYSPQGMWMPTGQTIGGYGQPAGRGGPPPPPSFAPFLVSTTPGPFPPPQGFPPGYATPPPFGYGYGPPPPPPDQFVSSGVPPPPGTPGAAPLAFPPPPGQSAQDLSKPPSGQQDFPFSQFGNACFVKLSEWI.

RRM domains are found at residues 10–97 and 114–191; these read GKLF…RSRP and NKIF…RAEP. Disordered regions lie at residues 73–116 and 184–345; these read HTLD…SNKI and VEVK…DFPF. Basic and acidic residues-rich tracts occupy residues 91–112 and 184–195; these read QPER…ENSR and VEVKRAEPRDSK. A compositionally biased stretch (polar residues) spans 203–231; that stretch reads GSNQWGSRAMQSTANGWTGQPPQTWQGYS. Residues 242–253 are compositionally biased toward gly residues; sequence TIGGYGQPAGRG. A compositionally biased stretch (pro residues) spans 271–301; the sequence is GPFPPPQGFPPGYATPPPFGYGYGPPPPPPD. The span at 328–345 shows a compositional bias: polar residues; the sequence is QSAQDLSKPPSGQQDFPF.

As to quaternary structure, component of a mRNP complex, at least composed of DAZAP1, IGF2BP3-A, STAU and VgRBP60. Binds to the 3'-UTR of Vg1 mRNA. Interacts with profilin, a protein involved in actin assembly. Interacts with VgRBP71. As to expression, expressed in oocytes.

It is found in the cytoplasm. Functionally, RNA-binding protein, which is required during gametogenesis. May be involved in the actin-dependent anchoring of Vg1 mRNA in the vegetal cortex of the oocyte. This is DAZ-associated protein 1 (dazap1) from Xenopus laevis (African clawed frog).